The sequence spans 147 residues: Diaminohydroxyphosphoribosylamino-pyrimidine deaminase (147 aa).

Residues Met1–Lys123 form the CMP/dCMP-type deaminase domain. His50 contacts Zn(2+). Glu52 functions as the Proton donor in the catalytic mechanism. Positions 75 and 84 each coordinate Zn(2+).

This sequence belongs to the cytidine and deoxycytidylate deaminase family. The cofactor is Zn(2+).

The enzyme catalyses 2,5-diamino-6-hydroxy-4-(5-phosphoribosylamino)-pyrimidine + H2O + H(+) = 5-amino-6-(5-phospho-D-ribosylamino)uracil + NH4(+). The protein operates within cofactor biosynthesis; riboflavin biosynthesis; 5-amino-6-(D-ribitylamino)uracil from GTP: step 2/4. The protein is Diaminohydroxyphosphoribosylamino-pyrimidine deaminase (ribD1) of Buchnera aphidicola subsp. Acyrthosiphon pisum (strain APS) (Acyrthosiphon pisum symbiotic bacterium).